Here is a 101-residue protein sequence, read N- to C-terminus: Large ribosomal subunit protein uL24 (101 aa).

The protein belongs to the universal ribosomal protein uL24 family. As to quaternary structure, part of the 50S ribosomal subunit.

One of two assembly initiator proteins, it binds directly to the 5'-end of the 23S rRNA, where it nucleates assembly of the 50S subunit. Functionally, one of the proteins that surrounds the polypeptide exit tunnel on the outside of the subunit. The chain is Large ribosomal subunit protein uL24 from Streptococcus pneumoniae (strain ATCC 700669 / Spain 23F-1).